The primary structure comprises 1140 residues: Rho GTPase-activating protein gacF (1140 aa).

Disordered stretches follow at residues 1-145 (MKTH…KPSR), 189-236 (ESDI…IEPI), 455-504 (INNN…STSF), 520-644 (EVQQ…GLES), 661-700 (ESSK…DEDE), 720-759 (ETND…NNIS), 773-927 (AKVT…STLS), and 952-1095 (TSSP…NHTN). Low complexity-rich tracts occupy residues 10–26 (LGGL…LKSF) and 35–71 (QQQQ…ASSS). Residues 28–55 (TEEVIHEQQQQQQQHNNNNNNNNNHQRQ) adopt a coiled-coil conformation. The segment covering 72–82 (IEETSGYLSKT) has biased composition (polar residues). 2 stretches are compositionally biased toward low complexity: residues 83-136 (SSSS…TSSP) and 193-222 (DNGS…SSSS). One can recognise a Rho-GAP domain in the interval 234 to 409 (EPISQSTEDY…RLIENYHSIF (176 aa)). Low complexity-rich tracts occupy residues 456–475 (NNNS…SPYK) and 482–493 (PKSSPKLNNRNS). A compositionally biased stretch (polar residues) spans 494–504 (ISPKLSSSTSF). Residues 517 to 548 (ISDEVQQEQQNQQQQQDEQQDEQQDEQQDEQQ) are a coiled coil. Over residues 520–533 (EVQQEQQNQQQQQD) the composition is skewed to low complexity. Residues 534–549 (EQQDEQQDEQQDEQQD) are compositionally biased toward acidic residues. Residues 550 to 566 (EQNSNSTSINTSSSSIT) are compositionally biased toward low complexity. Polar residues predominate over residues 572–596 (STVQYLNRINTCRRPSSWTNNNRIK). The segment covering 597–606 (QQQHHHHHHQ) has biased composition (basic residues). Residues 607–631 (QQQQHQQHQQQQSSSSESNSSLTSS) show a composition bias toward low complexity. Polar residues-rich tracts occupy residues 632 to 641 (PQKRLNSVNG) and 672 to 684 (NRQM…NNIG). Residues 724-759 (DNNNNDQINNSNSSNNIPKTTITTTTNNTTTTNNIS) show a composition bias toward low complexity. A compositionally biased stretch (polar residues) spans 773–796 (AKVTPTPTPAPMQTSSFLSTKQTN). The span at 797-822 (SPSSSSSPSSTVSSTSSSPSSSLSSS) shows a compositional bias: low complexity. The span at 823-854 (IDNKTMSNVNYNRFQPANRTVSSPNVRNFSVP) shows a compositional bias: polar residues. 3 stretches are compositionally biased toward low complexity: residues 891–914 (KPKN…NSTP), 952–1058 (TSSP…TSST), and 1065–1079 (HSNS…SSSS).

It localises to the cytoplasm. Its function is as follows. Rho GTPase-activating protein involved in the signal transduction pathway. In Dictyostelium discoideum (Social amoeba), this protein is Rho GTPase-activating protein gacF (gacF).